The sequence spans 344 residues: Proline-rich transmembrane protein 2 (344 aa).

Disordered stretches follow at residues 1–220 and 233–265; these read MAAS…GAPP and GRAHGGHPGSPRGSLSRHPSSQLAGPGVEGGEG. Topologically, residues 1-272 are cytoplasmic; sequence MAASSSEVSE…GEGTQKPRDY (272 aa). Serine 28 carries the post-translational modification Phosphoserine. Residues 69 to 82 show a composition bias toward low complexity; the sequence is PETTETPVETPETV. 2 positions are modified to phosphothreonine: threonine 74 and threonine 78. Over residues 124–143 the composition is skewed to polar residues; the sequence is AEQQSAAPPEPTSEQALQLN. Pro residues predominate over residues 151–162; it reads TSQPPPKPPLQA. Residues 168–178 show a composition bias toward polar residues; that stretch reads ENPTTEVLTES. Residues 201–211 are compositionally biased toward pro residues; sequence APQPHSPPSTK. The residue at position 242 (serine 242) is a Phosphoserine. Arginine 244 carries the post-translational modification Omega-N-methylarginine. Residues serine 252 and serine 253 each carry the phosphoserine modification. The segment at residues 273 to 293 is an intramembrane region (helical); the sequence is IILAILSCFCPMWPVNIVAFA. Residues 294 to 321 are Cytoplasmic-facing; that stretch reads YAVMSRNSLQQGDVDGAQRLGRVAKLLS. A helical transmembrane segment spans residues 322–342; the sequence is IVALVGGVLIIIASCVINLGV. At 343–344 the chain is on the extracellular side; it reads YK.

Belongs to the CD225/Dispanin family. As to quaternary structure, component of the outer core of AMPAR complex. AMPAR complex consists of an inner core made of 4 pore-forming GluA/GRIA proteins (GRIA1, GRIA2, GRIA3 and GRIA4) and 4 major auxiliary subunits arranged in a twofold symmetry. One of the two pairs of distinct binding sites is occupied either by CNIH2, CNIH3 or CACNG2, CACNG3. The other harbors CACNG2, CACNG3, CACNG4, CACNG8 or GSG1L. This inner core of AMPAR complex is complemented by outer core constituents binding directly to the GluA/GRIA proteins at sites distinct from the interaction sites of the inner core constituents. Outer core constituents include at least PRRT1, PRRT2, CKAMP44/SHISA9, FRRS1L and NRN1. The proteins of the inner and outer core serve as a platform for other, more peripherally associated AMPAR constituents. Alone or in combination, these auxiliary subunits control the gating and pharmacology of the AMPAR complex and profoundly impact their biogenesis and protein processing. Interacts with intersectin 1/ITSN1. Interacts with SNARE complex components, including SNAP25, STX1A, SYT1 and SYT2; this interaction may inhibit SNARE complex formation. Neuron-specific expression throughout the brain, including hippocampus (at protein level).

The protein localises to the cell membrane. It localises to the presynaptic cell membrane. Its subcellular location is the synapse. The protein resides in the cell projection. It is found in the axon. The protein localises to the cytoplasmic vesicle. It localises to the secretory vesicle. Its subcellular location is the synaptic vesicle membrane. The protein resides in the postsynaptic density membrane. It is found in the dendritic spine. Its function is as follows. As a component of the outer core of AMPAR complex, may be involved in synaptic transmission in the central nervous system. In hippocampal neurons, in presynaptic terminals, plays an important role in the final steps of neurotransmitter release, possibly by regulating Ca(2+)-sensing. In the cerebellum, may inhibit SNARE complex formation and down-regulate short-term facilitation. This Rattus norvegicus (Rat) protein is Proline-rich transmembrane protein 2 (Prrt2).